The sequence spans 201 residues: Small ribosomal subunit protein uS5 (201 aa).

The tract at residues 1–28 (MAGPQRRGSGAGGGERRDRKGRDGGAGA) is disordered. The span at 14–23 (GERRDRKGRD) shows a compositional bias: basic and acidic residues. Residues 34-97 (YVERVVAINR…EEAKKHFFKV (64 aa)) form the S5 DRBM domain.

Belongs to the universal ribosomal protein uS5 family. As to quaternary structure, part of the 30S ribosomal subunit. Contacts proteins S4 and S8.

Its function is as follows. With S4 and S12 plays an important role in translational accuracy. In terms of biological role, located at the back of the 30S subunit body where it stabilizes the conformation of the head with respect to the body. The chain is Small ribosomal subunit protein uS5 from Streptomyces coelicolor (strain ATCC BAA-471 / A3(2) / M145).